Here is a 504-residue protein sequence, read N- to C-terminus: Histidine ammonia-lyase (504 aa).

Residues 142 to 144 constitute a cross-link (5-imidazolinone (Ala-Gly)); that stretch reads ASG. At Ser-143 the chain carries 2,3-didehydroalanine (Ser).

The protein belongs to the PAL/histidase family. In terms of processing, contains an active site 4-methylidene-imidazol-5-one (MIO), which is formed autocatalytically by cyclization and dehydration of residues Ala-Ser-Gly.

It is found in the cytoplasm. The catalysed reaction is L-histidine = trans-urocanate + NH4(+). Its pathway is amino-acid degradation; L-histidine degradation into L-glutamate; N-formimidoyl-L-glutamate from L-histidine: step 1/3. The sequence is that of Histidine ammonia-lyase from Staphylococcus aureus (strain JH1).